The following is a 318-amino-acid chain: Probable tyrosine phosphatase protein N1 (318 aa).

Residues 26-292 (IVRLEHHQVI…LILQPGYYVL (267 aa)) form the Tyrosine-protein phosphatase domain. Cys-233 (phosphocysteine intermediate) is an active-site residue.

This sequence belongs to the protein-tyrosine phosphatase family.

It carries out the reaction O-phospho-L-tyrosyl-[protein] + H2O = L-tyrosyl-[protein] + phosphate. This is Probable tyrosine phosphatase protein N1 (N3) from Microplitis demolitor bracovirus (isolate Webb) (MdBV).